We begin with the raw amino-acid sequence, 901 residues long: Serine/threonine-protein kinase-like protein CR4 (901 aa).

A signal peptide spans 1–22; it reads MDIVPVVALCCCLVLLPSWAYG. Tandem repeats lie at residues 31–66, 70–105, 123–158, 160–193, 201–234, 251–285, and 290–328. The 7 X 36 AA repeats stretch occupies residues 31–328; the sequence is VSYGEDGPVF…PLALPMAVSP (298 aa). N-linked (GlcNAc...) asparagine glycosylation is found at Asn149 and Asn177. Residue Asn280 is glycosylated (N-linked (GlcNAc...) asparagine). Residues 335–389 form a TNFR-Cys repeat; that stretch reads SCSHGYYEYANHGEVGSGSKTCKPANSRLCLPCSVGCPDDSYESSPCNATADRVC. 3 disulfide bridges follow: Cys336–Cys364, Cys367–Cys381, and Cys371–Cys389. Asn382 carries an N-linked (GlcNAc...) asparagine glycan. Residues 423–443 form a helical membrane-spanning segment; the sequence is IFVAEIAFAVILVFSVTAIAC. The Protein kinase domain occupies 504–781; sequence FSEDSQVGKG…KVTTALERAL (278 aa). Residues 510-518 and Lys532 each bind ATP; that span reads VGKGSFSCV. Asp633 (proton acceptor) is an active-site residue. Residues 845–901 are disordered; that stretch reads VTSSQRRKSSASEADMDGRTTTDGRNVGSSIGDGLRSLEEEISPASPQENLYLQHNF. Residues 889–901 are compositionally biased toward polar residues; the sequence is ASPQENLYLQHNF.

The protein belongs to the protein kinase superfamily. Ser/Thr protein kinase family. Homodimer. Autophosphorylated. As to expression, specifically expressed in the epidermal cells of paleas and lemmas.

Its subcellular location is the cell membrane. The protein resides in the endosome. The protein localises to the multivesicular body membrane. The enzyme catalyses L-seryl-[protein] + ATP = O-phospho-L-seryl-[protein] + ADP + H(+). It carries out the reaction L-threonyl-[protein] + ATP = O-phospho-L-threonyl-[protein] + ADP + H(+). Receptor protein kinase. Could play a role in a differentiation signal. Controls formative cell division in meristems. Regulates epidermal cell differentiation in many organs. During floral organogenesis, required to maintain the interlocking of the palea and lemma, and fertility. Triggers culm elongation. The chain is Serine/threonine-protein kinase-like protein CR4 from Oryza sativa subsp. japonica (Rice).